A 363-amino-acid chain; its full sequence is 3-isopropylmalate dehydrogenase (363 aa).

78 to 91 (XXXXXXXXXXXXXX) contacts NAD(+). Substrate is bound by residues Arg-99, Arg-109, Arg-138, and Asp-227. The Mg(2+) site is built by Asp-227, Asp-251, and Asp-255. Residue 285–297 (GSAPDIEGKNIAN) participates in NAD(+) binding.

This sequence belongs to the isocitrate and isopropylmalate dehydrogenases family. LeuB type 1 subfamily. As to quaternary structure, homodimer. Mg(2+) serves as cofactor. Requires Mn(2+) as cofactor.

It localises to the cytoplasm. It catalyses the reaction (2R,3S)-3-isopropylmalate + NAD(+) = 4-methyl-2-oxopentanoate + CO2 + NADH. Its pathway is amino-acid biosynthesis; L-leucine biosynthesis; L-leucine from 3-methyl-2-oxobutanoate: step 3/4. Its function is as follows. Catalyzes the oxidation of 3-carboxy-2-hydroxy-4-methylpentanoate (3-isopropylmalate) to 3-carboxy-4-methyl-2-oxopentanoate. The product decarboxylates to 4-methyl-2 oxopentanoate. The chain is 3-isopropylmalate dehydrogenase from Buchnera aphidicola subsp. Uroleucon solidaginis.